The following is a 669-amino-acid chain: Phosphatidylinositol-3-phosphate phosphatase MTMR1 (669 aa).

N-acetylmethionine is present on Met-1. Residues 1–17 (MDRPVAAAAAASAASCE) are compositionally biased toward low complexity. The disordered stretch occupies residues 1–55 (MDRPVAAAAAASAASCEGAGGPGPGPGASWRPSRVAGGASASSRHPSIETLDSPT). 2 positions are modified to phosphoserine: Ser-47 and Ser-53. The 72-residue stretch at 94–165 (NKLAQMEEAP…GVISRVEKIG (72 aa)) folds into the GRAM domain. Positions 230-605 (GWKVYDPVSE…SHLELWVNYY (376 aa)) constitute a Myotubularin phosphatase domain. Positions 355, 380, and 381 each coordinate a 1,2-diacyl-sn-glycero-3-phospho-(1D-myo-inositol-3-phosphate). Residue Cys-442 is the Phosphocysteine intermediate of the active site. A 1,2-diacyl-sn-glycero-3-phospho-(1D-myo-inositol-3-phosphate) is bound by residues Ser-443, Asp-444, Gly-445, Trp-446, Asp-447, Arg-448, and Arg-488. Residue Ser-443 coordinates phosphate. Phosphate contacts are provided by Gly-445, Trp-446, Asp-447, and Arg-448. A required for dimerization region spans residues 612–669 (MRPQMPIHQNLKELLAIKAELQKRVEDLQREMATRTISSSSERGSSPTHSATPVHTSV). Positions 644 to 669 (ATRTISSSSERGSSPTHSATPVHTSV) are disordered. Residues 649-661 (SSSSERGSSPTHS) are compositionally biased toward low complexity.

It belongs to the protein-tyrosine phosphatase family. Non-receptor class myotubularin subfamily. As to quaternary structure, homodimer. In terms of tissue distribution, widely expressed. Detected in skeletal muscle, heart, lung, liver and brain.

It localises to the cell membrane. The protein resides in the cytoplasm. It catalyses the reaction a 1,2-diacyl-sn-glycero-3-phospho-(1D-myo-inositol-3-phosphate) + H2O = a 1,2-diacyl-sn-glycero-3-phospho-(1D-myo-inositol) + phosphate. The catalysed reaction is 1,2-dioctanoyl-sn-glycero-3-phospho-(1-D-myo-inositol-3-phosphate) + H2O = 1,2-dioctanoyl-sn-glycero-3-phospho-(1D-myo-inositol) + phosphate. It carries out the reaction a 1,2-diacyl-sn-glycero-3-phospho-(1D-myo-inositol-3,5-bisphosphate) + H2O = a 1,2-diacyl-sn-glycero-3-phospho-(1D-myo-inositol-5-phosphate) + phosphate. Functionally, lipid phosphatase that specifically dephosphorylates the D-3 position of phosphatidylinositol 3-phosphate, generating phosphatidylinositol. Could also dephosphorylate phosphatidylinositol 3,5-bisphosphate to produce phosphatidylinositol 5-phosphate. This chain is Phosphatidylinositol-3-phosphate phosphatase MTMR1, found in Mus musculus (Mouse).